A 446-amino-acid polypeptide reads, in one-letter code: Transcriptional regulator STERILE APETALA (446 aa).

The segment covering 1-10 (MSTSSSSSDN) has biased composition (low complexity). A disordered region spans residues 1–32 (MSTSSSSSDNGAGGSGGVFEAPSPSRPRRGAN).

As to expression, expressed in inflorescence and floral meristems, young floral organ primordia, and later in ovule primordia.

The protein resides in the nucleus. Its function is as follows. Transcriptional regulator involved in the specification of floral identity. Acts as A class cadastral protein by repressing the C class floral homeotic gene AGAMOUS in the external flower organs in association with APETALA2 and other repressors. Is required to maintain floral meristem identity in concert with AGAMOUS. Also interacts with APETALA2 to ensure the normal development of ovule. The protein is Transcriptional regulator STERILE APETALA (SAP) of Arabidopsis thaliana (Mouse-ear cress).